The primary structure comprises 329 residues: 4-hydroxy-3-methylbut-2-enyl diphosphate reductase 1 (329 aa).

[4Fe-4S] cluster is bound at residue C29. The (2E)-4-hydroxy-3-methylbut-2-enyl diphosphate site is built by H58 and H95. Positions 58 and 95 each coordinate dimethylallyl diphosphate. Positions 58 and 95 each coordinate isopentenyl diphosphate. C117 lines the [4Fe-4S] cluster pocket. H145 is a (2E)-4-hydroxy-3-methylbut-2-enyl diphosphate binding site. H145 provides a ligand contact to dimethylallyl diphosphate. H145 lines the isopentenyl diphosphate pocket. E147 serves as the catalytic Proton donor. T185 lines the (2E)-4-hydroxy-3-methylbut-2-enyl diphosphate pocket. C215 contributes to the [4Fe-4S] cluster binding site. Positions 243, 244, 245, and 287 each coordinate (2E)-4-hydroxy-3-methylbut-2-enyl diphosphate. S243, S244, N245, and S287 together coordinate dimethylallyl diphosphate. Isopentenyl diphosphate-binding residues include S243, S244, N245, and S287.

This sequence belongs to the IspH family. [4Fe-4S] cluster is required as a cofactor.

The catalysed reaction is isopentenyl diphosphate + 2 oxidized [2Fe-2S]-[ferredoxin] + H2O = (2E)-4-hydroxy-3-methylbut-2-enyl diphosphate + 2 reduced [2Fe-2S]-[ferredoxin] + 2 H(+). The enzyme catalyses dimethylallyl diphosphate + 2 oxidized [2Fe-2S]-[ferredoxin] + H2O = (2E)-4-hydroxy-3-methylbut-2-enyl diphosphate + 2 reduced [2Fe-2S]-[ferredoxin] + 2 H(+). Its pathway is isoprenoid biosynthesis; dimethylallyl diphosphate biosynthesis; dimethylallyl diphosphate from (2E)-4-hydroxy-3-methylbutenyl diphosphate: step 1/1. It participates in isoprenoid biosynthesis; isopentenyl diphosphate biosynthesis via DXP pathway; isopentenyl diphosphate from 1-deoxy-D-xylulose 5-phosphate: step 6/6. Catalyzes the conversion of 1-hydroxy-2-methyl-2-(E)-butenyl 4-diphosphate (HMBPP) into a mixture of isopentenyl diphosphate (IPP) and dimethylallyl diphosphate (DMAPP). Acts in the terminal step of the DOXP/MEP pathway for isoprenoid precursor biosynthesis. In Mycobacterium tuberculosis (strain CDC 1551 / Oshkosh), this protein is 4-hydroxy-3-methylbut-2-enyl diphosphate reductase 1.